A 70-amino-acid chain; its full sequence is Large ribosomal subunit protein bL31 (70 aa).

Residues Cys16, Cys18, Cys37, and Cys40 each contribute to the Zn(2+) site.

Belongs to the bacterial ribosomal protein bL31 family. Type A subfamily. As to quaternary structure, part of the 50S ribosomal subunit. Requires Zn(2+) as cofactor.

Functionally, binds the 23S rRNA. This chain is Large ribosomal subunit protein bL31, found in Shewanella frigidimarina (strain NCIMB 400).